The sequence spans 152 residues: Endoribonuclease YbeY (152 aa).

Positions 113, 117, and 123 each coordinate Zn(2+).

It belongs to the endoribonuclease YbeY family. The cofactor is Zn(2+).

It localises to the cytoplasm. Single strand-specific metallo-endoribonuclease involved in late-stage 70S ribosome quality control and in maturation of the 3' terminus of the 16S rRNA. This is Endoribonuclease YbeY from Pseudoalteromonas atlantica (strain T6c / ATCC BAA-1087).